A 40-amino-acid chain; its full sequence is Spodomicin (40 aa).

Disulfide bonds link Cys-6-Cys-20, Cys-10-Cys-32, and Cys-21-Cys-39.

In terms of assembly, monomer. Contains three disulfide bonds. Hemolymph.

It localises to the secreted. Fungicide. The polypeptide is Spodomicin (Spodoptera littoralis (Egyptian cotton leafworm)).